The sequence spans 488 residues: UDP-N-acetylmuramate--L-alanine ligase (488 aa).

Gly-127 to Thr-133 serves as a coordination point for ATP.

Belongs to the MurCDEF family.

It is found in the cytoplasm. It carries out the reaction UDP-N-acetyl-alpha-D-muramate + L-alanine + ATP = UDP-N-acetyl-alpha-D-muramoyl-L-alanine + ADP + phosphate + H(+). Its pathway is cell wall biogenesis; peptidoglycan biosynthesis. Cell wall formation. The chain is UDP-N-acetylmuramate--L-alanine ligase from Shewanella putrefaciens (strain CN-32 / ATCC BAA-453).